The sequence spans 185 residues: NADH-ubiquinone oxidoreductase chain 6 (185 aa).

5 helical membrane-spanning segments follow: residues 3–23 (SLFM…ISTP), 28–48 (SVFW…SLGL), 54–74 (IFII…IMLI), 87–107 (HFLP…TNSP), and 134–154 (ELVL…ILLA).

The protein belongs to the complex I subunit 6 family.

The protein localises to the mitochondrion membrane. The enzyme catalyses a ubiquinone + NADH + 5 H(+)(in) = a ubiquinol + NAD(+) + 4 H(+)(out). Core subunit of the mitochondrial membrane respiratory chain NADH dehydrogenase (Complex I) that is believed to belong to the minimal assembly required for catalysis. Complex I functions in the transfer of electrons from NADH to the respiratory chain. The immediate electron acceptor for the enzyme is believed to be ubiquinone. In Sarcophyton glaucum (Toadstool umbrella leather coral), this protein is NADH-ubiquinone oxidoreductase chain 6 (ND6).